The chain runs to 159 residues: 3-hydroxyacyl-[acyl-carrier-protein] dehydratase FabZ (159 aa).

The active site involves H58.

It belongs to the thioester dehydratase family. FabZ subfamily.

The protein resides in the cytoplasm. It carries out the reaction a (3R)-hydroxyacyl-[ACP] = a (2E)-enoyl-[ACP] + H2O. Involved in unsaturated fatty acids biosynthesis. Catalyzes the dehydration of short chain beta-hydroxyacyl-ACPs and long chain saturated and unsaturated beta-hydroxyacyl-ACPs. The chain is 3-hydroxyacyl-[acyl-carrier-protein] dehydratase FabZ from Helicobacter pylori (strain HPAG1).